The sequence spans 120 residues: NAD(P)H-quinone oxidoreductase subunit 3, chloroplastic (120 aa).

A run of 3 helical transmembrane segments spans residues 9–29, 64–84, and 88–108; these read IFWTFLIIASLIPILAFWISG, MFALVFVVFDVETVFLYPWAM, and VLGVSVFIEAFIFVLILVVGL.

This sequence belongs to the complex I subunit 3 family. NDH is composed of at least 16 different subunits, 5 of which are encoded in the nucleus.

The protein localises to the plastid. Its subcellular location is the chloroplast thylakoid membrane. It catalyses the reaction a plastoquinone + NADH + (n+1) H(+)(in) = a plastoquinol + NAD(+) + n H(+)(out). It carries out the reaction a plastoquinone + NADPH + (n+1) H(+)(in) = a plastoquinol + NADP(+) + n H(+)(out). NDH shuttles electrons from NAD(P)H:plastoquinone, via FMN and iron-sulfur (Fe-S) centers, to quinones in the photosynthetic chain and possibly in a chloroplast respiratory chain. The immediate electron acceptor for the enzyme in this species is believed to be plastoquinone. Couples the redox reaction to proton translocation, and thus conserves the redox energy in a proton gradient. In Brachypodium distachyon (Purple false brome), this protein is NAD(P)H-quinone oxidoreductase subunit 3, chloroplastic.